The sequence spans 129 residues: Phosphomevalonate dehydratase small subunit (129 aa).

Serine 61 (proton acceptor) is an active-site residue.

This sequence belongs to the AcnX type II small subunit family. In terms of assembly, heterodimer composed of a large subunit (PMDh-L) and a small subunit (PMDh-S).

It carries out the reaction (R)-5-phosphomevalonate = (2E)-3-methyl-5-phosphooxypent-2-enoate + H2O. The protein operates within isoprenoid biosynthesis; isopentenyl diphosphate biosynthesis via mevalonate pathway. Its function is as follows. Component of a hydro-lyase that catalyzes the dehydration of mevalonate 5-phosphate (MVA5P) to form trans-anhydromevalonate 5-phosphate (tAHMP). Involved in the archaeal mevalonate (MVA) pathway, which provides fundamental precursors for isoprenoid biosynthesis, such as isopentenyl diphosphate (IPP) and dimethylallyl diphosphate (DMAPP). In Methanocaldococcus jannaschii (strain ATCC 43067 / DSM 2661 / JAL-1 / JCM 10045 / NBRC 100440) (Methanococcus jannaschii), this protein is Phosphomevalonate dehydratase small subunit.